A 555-amino-acid polypeptide reads, in one-letter code: Undecaprenyl phosphate-alpha-4-amino-4-deoxy-L-arabinose arabinosyl transferase (555 aa).

11 helical membrane passes run 6-26 (GSWA…PLNG), 87-107 (FGSV…AMLM), 116-136 (LATL…YSVL), 178-198 (FMTK…PIVI), 206-226 (LLIY…PWAL), 257-277 (APFW…LALL), 293-313 (ELFF…IAKG), 315-335 (LPTY…AYAE), 351-371 (VLNG…GSGL), 384-404 (PKIV…VVSV), and 411-431 (WSWA…AIPQ).

It belongs to the glycosyltransferase 83 family.

The protein localises to the cell inner membrane. The enzyme catalyses 4-amino-4-deoxy-alpha-L-arabinopyranosyl di-trans,octa-cis-undecaprenyl phosphate + lipid IVA = lipid IIA + di-trans,octa-cis-undecaprenyl phosphate.. It participates in lipopolysaccharide metabolism; 4-amino-4-deoxy-beta-L-arabinose-lipid A biosynthesis. Catalyzes the transfer of the L-Ara4N moiety of the glycolipid undecaprenyl phosphate-alpha-L-Ara4N to lipid A. The modified arabinose is attached to lipid A and is required for resistance to polymyxin and cationic antimicrobial peptides. This chain is Undecaprenyl phosphate-alpha-4-amino-4-deoxy-L-arabinose arabinosyl transferase, found in Serratia proteamaculans (strain 568).